The sequence spans 154 residues: Myoglobin (154 aa).

A Globin domain is found at Gly-2–Lys-148. Ser-4 carries the phosphoserine modification. Position 65 (His-65) interacts with nitrite. His-65 contributes to the O2 binding site. Thr-68 carries the post-translational modification Phosphothreonine. His-94 contacts heme b.

This sequence belongs to the globin family. Monomeric.

The protein localises to the cytoplasm. The protein resides in the sarcoplasm. It catalyses the reaction Fe(III)-heme b-[protein] + nitric oxide + H2O = Fe(II)-heme b-[protein] + nitrite + 2 H(+). The enzyme catalyses H2O2 + AH2 = A + 2 H2O. Monomeric heme protein which primary function is to store oxygen and facilitate its diffusion within muscle tissues. Reversibly binds oxygen through a pentacoordinated heme iron and enables its timely and efficient release as needed during periods of heightened demand. Depending on the oxidative conditions of tissues and cells, and in addition to its ability to bind oxygen, it also has a nitrite reductase activity whereby it regulates the production of bioactive nitric oxide. Under stress conditions, like hypoxia and anoxia, it also protects cells against reactive oxygen species thanks to its pseudoperoxidase activity. The protein is Myoglobin (MB) of Canis lupus familiaris (Dog).